The following is a 340-amino-acid chain: MHNTDVVIIGAGPVGLFAVFQAGMLGMKCHVIDAQEVIGGQCITLYPEKPIYDIPAYPKIVAEELIKQLALQAAPFNPIYHLNQQAIELNKQDDFFEIKTSKNTLIKSKVIIIAAGAGSFGPNKPPLANIEDFESKSVFYFINDKSKFAGKNIVIAGGGDSAVDWAISLSDIANKIYLVHRRDKFTAAPESVRQLRHIAETNKIELITGYQLNALDGNNSELQSVIVKDLQNNTRKLDANILLPFFGLKQDLGSLANWGLNVKLHHIEVDSSYYQTNIEGIYAIGDIAHYVGKLKLILTGFAEAASSLHHAYSRVFDGKALHFEYSTTKNTGKRSKSVTK.

FAD-binding residues include Asp-33, Gln-41, Tyr-46, Ala-86, Phe-120, Asp-286, and Thr-327.

This sequence belongs to the ferredoxin--NADP reductase type 2 family. Homodimer. FAD is required as a cofactor.

The catalysed reaction is 2 reduced [2Fe-2S]-[ferredoxin] + NADP(+) + H(+) = 2 oxidized [2Fe-2S]-[ferredoxin] + NADPH. The sequence is that of Ferredoxin--NADP reductase from Rickettsia rickettsii (strain Iowa).